Here is a 228-residue protein sequence, read N- to C-terminus: Cutinase (228 aa).

The signal sequence occupies residues methionine 1 to alanine 16. Cysteine 49 and cysteine 129 are oxidised to a cystine. The active-site Nucleophile is serine 140. Cysteine 191 and cysteine 198 form a disulfide bridge. The active site involves aspartate 195. The active-site Proton donor/acceptor is histidine 208.

Belongs to the cutinase family. In terms of processing, the 2 disulfide bonds play a critical role in holding the catalytic residues in juxta-position; reduction of the disulfide bridges results in the complete inactivation of the enzyme.

The protein localises to the secreted. The enzyme catalyses cutin + H2O = cutin monomers.. Its activity is regulated as follows. Partially inhibited by berberine; higher inhibitory effects are observed with longer chain polyester substrates. In terms of biological role, catalyzes the hydrolysis of complex carboxylic polyesters found in the cell wall of plants. Degrades cutin, a macromolecule that forms the structure of the plant cuticle. Allows pathogenic fungi to penetrate through the cuticular barrier into the host plant during the initial stage of fungal infection. This is Cutinase (CUTA) from Colletotrichum truncatum (Anthracnose fungus).